The chain runs to 186 residues: Putative 5'(3')-deoxyribonucleotidase (186 aa).

Aspartate 6 acts as the Nucleophile in catalysis. 3 residues coordinate Mg(2+): aspartate 6, aspartate 8, and aspartate 137. Aspartate 8 functions as the Proton donor in the catalytic mechanism.

This sequence belongs to the 5'(3')-deoxyribonucleotidase family. Mg(2+) serves as cofactor.

Functionally, dephosphorylates the 5' and 2'(3')-phosphates of deoxyribonucleotides. The sequence is that of Putative 5'(3')-deoxyribonucleotidase from Bordetella pertussis (strain Tohama I / ATCC BAA-589 / NCTC 13251).